The following is a 329-amino-acid chain: (12E)-labda-8(17),12,14-triene synthase (329 aa).

Residues Asp-90 and Glu-95 each contribute to the Mg(2+) site. Positions 90 to 95 (DDMHGE) match the DDXXXE motif motif. A substrate-binding site is contributed by Arg-184. Asn-230 and Ser-234 together coordinate Mg(2+). An NXXXSXXXE motif motif is present at residues 230–238 (NDLASYERE). Substrate is bound at residue Arg-237. Position 238 (Glu-238) interacts with Mg(2+). 316-317 (RY) provides a ligand contact to substrate.

Belongs to the terpene synthase family. Mg(2+) is required as a cofactor.

It catalyses the reaction (+)-copalyl diphosphate = (12E)-labda-8(17),12,14-triene + diphosphate. Involved in the biosynthesis of the mercapturic acid derivative diterpene cyslabdan A, a potentiator of the beta-lactam antibiotic imipenem. Catalyzes the conversion of (+)-copalyl diphosphate to yield labda-8(17),12(E),14-triene (biformene). This is (12E)-labda-8(17),12,14-triene synthase from Streptomyces cyslabdanicus.